The chain runs to 295 residues: Sulfotransferase 1A1 (295 aa).

48–53 (KSGTTW) contacts 3'-phosphoadenylyl sulfate. A substrate-binding site is contributed by 106–108 (KTH). Histidine 108 acts as the Proton acceptor in catalysis. 3'-phosphoadenylyl sulfate-binding positions include arginine 130, serine 138, tyrosine 193, 227-232 (TSFKEM), and 255-259 (FMRKG). Serine 138 carries the phosphoserine modification.

Belongs to the sulfotransferase 1 family. As to quaternary structure, homodimer. Distal lung parenchyma.

It is found in the cytoplasm. The catalysed reaction is a phenol + 3'-phosphoadenylyl sulfate = an aryl sulfate + adenosine 3',5'-bisphosphate + H(+). It carries out the reaction 17beta-estradiol + 3'-phosphoadenylyl sulfate = 17beta-estradiol 3-sulfate + adenosine 3',5'-bisphosphate + H(+). It catalyses the reaction 4-ethylphenol + 3'-phosphoadenylyl sulfate = 4-ethylphenyl sulfate + adenosine 3',5'-bisphosphate + H(+). The enzyme catalyses 4-nitrophenol + 3'-phosphoadenylyl sulfate = 4-nitrophenyl sulfate + adenosine 3',5'-bisphosphate. The catalysed reaction is dopamine + 3'-phosphoadenylyl sulfate = dopamine 3-O-sulfate + adenosine 3',5'-bisphosphate + H(+). It carries out the reaction dopamine + 3'-phosphoadenylyl sulfate = dopamine 4-O-sulfate + adenosine 3',5'-bisphosphate + H(+). It catalyses the reaction 3,3',5-triiodo-L-thyronine + 3'-phosphoadenylyl sulfate = 3,3',5-triiodo-L-thyronine sulfate + adenosine 3',5'-bisphosphate + H(+). The enzyme catalyses 3,3',5'-triiodo-L-thyronine + 3'-phosphoadenylyl sulfate = 3,3',5'-triiodo-L-thyronine sulfate + adenosine 3',5'-bisphosphate + H(+). The catalysed reaction is 3,3'-diiodo-L-thyronine + 3'-phosphoadenylyl sulfate = 3,3'-diiodo-L-thyronine sulfate + adenosine 3',5'-bisphosphate + H(+). It carries out the reaction L-thyroxine + 3'-phosphoadenylyl sulfate = L-thyroxine sulfate + adenosine 3',5'-bisphosphate + H(+). Functionally, sulfotransferase that utilizes 3'-phospho-5'-adenylyl sulfate (PAPS) as sulfonate donor to catalyze the sulfate conjugation of a wide variety of acceptor molecules bearing a hydroxyl or an amine group. Sulfonation increases the water solubility of most compounds, and therefore their renal excretion, but it can also result in bioactivation to form active metabolites. Displays broad substrate specificity for small phenolic compounds. Plays an important role in the sulfonation of endogenous molecules such as steroid hormones. Mediates also the metabolic activation of carcinogenic N-hydroxyarylamines leading to highly reactive intermediates capable of forming DNA adducts, potentially resulting in mutagenesis. May play a role in gut microbiota-host metabolic interaction. O-sulfonates 4-ethylphenol (4-EP), a dietary tyrosine-derived metabolite produced by gut bacteria. The product 4-EPS crosses the blood-brain barrier and may negatively regulate oligodendrocyte maturation and myelination, affecting the functional connectivity of different brain regions associated with the limbic system. Catalyzes the sulfate conjugation of dopamine. Catalyzes the sulfation of T4 (L-thyroxine/3,5,3',5'-tetraiodothyronine), T3 (3,5,3'-triiodothyronine), rT3 (3,3',5'-triiodothyronine) and 3,3'-T2 (3,3'-diiodothyronine), with a substrate preference of 3,3'-T2 &gt; rT3 &gt; T3 &gt; T4. In Bos taurus (Bovine), this protein is Sulfotransferase 1A1 (SULT1A1).